A 247-amino-acid chain; its full sequence is 3(1)-hydroxy-L-isoleucine 4-dioxygenase (247 aa).

Fe cation contacts are provided by His-160, Asp-162, and His-213.

It belongs to the iron/ascorbate-dependent oxidoreductase family. L-ascorbate is required as a cofactor. Requires Fe(2+) as cofactor.

It carries out the reaction 3(1)-hydroxy-L-isoleucine + 2-oxoglutarate + O2 = (4S)-3(1),4-dihydroxy-L-isoleucine + succinate + CO2. Functionally, catalyzes the hydroxylation of L-4'-hydroxyisoleucine (4'-HIL) at the C-4 position to form L-4,4'-dihydroxyisoleucine (4,4'-DIHIL). Together with HilA, catalyzes the two step conversion of L-isoleucine into L-4,4'-dihydroxyisoleucine. In vitro, in the absence of HilA, can also catalyze the oxidation of L-methionine and the C-4-hydroxylation of L-leucine and L-isoleucine. This chain is 3(1)-hydroxy-L-isoleucine 4-dioxygenase, found in Pantoea ananatis (strain AJ13355).